Here is an 81-residue protein sequence, read N- to C-terminus: Large ribosomal subunit protein bL27 (81 aa).

Over residues 1–11 (MATSKSGGSSK) the composition is skewed to polar residues. Positions 1–20 (MATSKSGGSSKNGRDSISKR) are disordered.

Belongs to the bacterial ribosomal protein bL27 family.

This is Large ribosomal subunit protein bL27 from Borreliella afzelii (strain PKo) (Borrelia afzelii).